Consider the following 505-residue polypeptide: Deoxyguanosinetriphosphate triphosphohydrolase (505 aa).

An HD domain is found at 66–273 (RLTHSMEVQQ…MEAADDISYC (208 aa)).

It belongs to the dGTPase family. Type 1 subfamily. In terms of assembly, homotetramer. Requires Mg(2+) as cofactor.

It catalyses the reaction dGTP + H2O = 2'-deoxyguanosine + triphosphate + H(+). Functionally, dGTPase preferentially hydrolyzes dGTP over the other canonical NTPs. The protein is Deoxyguanosinetriphosphate triphosphohydrolase of Escherichia coli O127:H6 (strain E2348/69 / EPEC).